A 1086-amino-acid polypeptide reads, in one-letter code: Lon protease homolog, mitochondrial (1086 aa).

A mitochondrion-targeting transit peptide spans 1-55 (MLRTSCTSSLRRVVGKYVVSPLVASQIRFATSSVRSQPYLLNSELTELPAQFKRY). Residues 61-176 (TEKPEGDVPE…EPNEIVTNAG (116 aa)) are disordered. Residues 69–83 (PESGPEPSGESGISE) are compositionally biased toward low complexity. The span at 85 to 120 (SNVENDKHDGNDEIKPEAEKNEKDEIEKPEIDKDAI) shows a compositional bias: basic and acidic residues. Low complexity predominate over residues 124-163 (DGVSESSVENVSGSSSAAGGASAPPSGNSNNNNNNNNNNN). Residues 183–406 (LLAIPMKDRP…KALELLKVEL (224 aa)) enclose the Lon N-terminal domain. Residue 558 to 565 (GPPGTGKT) coordinates ATP. Composition is skewed to basic and acidic residues over residues 767–782 (EARE…EAKS) and 815–827 (KVDE…SEEL). 2 disordered regions span residues 767-788 (EARE…ITGS) and 800-835 (KAQS…EEEE). The 189-residue stretch at 871–1059 (IPPPGVATGL…QDVFDEIFPN (189 aa)) folds into the Lon proteolytic domain. Residues S965 and K1008 contribute to the active site.

This sequence belongs to the peptidase S16 family. In terms of assembly, homohexamer or homoheptamer. Organized in a ring with a central cavity.

The protein resides in the mitochondrion matrix. It catalyses the reaction Hydrolysis of proteins in presence of ATP.. In terms of biological role, ATP-dependent serine protease that mediates the selective degradation of misfolded, unassembled or oxidatively damaged polypeptides as well as certain short-lived regulatory proteins in the mitochondrial matrix. May also have a chaperone function in the assembly of inner membrane protein complexes. Participates in the regulation of mitochondrial gene expression and in the maintenance of the integrity of the mitochondrial genome. Binds to mitochondrial DNA in a site-specific manner. This is Lon protease homolog, mitochondrial from Scheffersomyces stipitis (strain ATCC 58785 / CBS 6054 / NBRC 10063 / NRRL Y-11545) (Yeast).